Reading from the N-terminus, the 96-residue chain is Large ribosomal subunit protein bL27 (96 aa).

A propeptide spanning residues 1–11 (MLKTLENLQLF) is cleaved from the precursor. The tract at residues 13-36 (HKKGGGSTSNGRDSQAKRLGAKAA) is disordered.

The protein belongs to the bacterial ribosomal protein bL27 family. In terms of processing, the N-terminus is cleaved by ribosomal processing cysteine protease Prp.

The protein is Large ribosomal subunit protein bL27 of Streptococcus thermophilus (strain CNRZ 1066).